The chain runs to 241 residues: Probable transcriptional regulatory protein LHK_02347 (241 aa).

The protein belongs to the TACO1 family.

Its subcellular location is the cytoplasm. The polypeptide is Probable transcriptional regulatory protein LHK_02347 (Laribacter hongkongensis (strain HLHK9)).